A 221-amino-acid polypeptide reads, in one-letter code: Very-long-chain (3R)-3-hydroxyacyl-CoA dehydratase PASTICCINO 2 (221 aa).

At 1–11 (MAGFLSVVRRV) the chain is on the cytoplasmic side. A helical transmembrane segment spans residues 12–32 (YLTLYNWIVFAGWAQVLYLAI). The Lumenal segment spans residues 33–51 (TTLKETGYENVYDAIEKPL). Residues 52–70 (QLAQTAAVLEILHGLVGLV) form a helical membrane-spanning segment. Residues 71–76 (RSPVSA) are Cytoplasmic-facing. Residues 77 to 95 (TLPQIGSRLFLTWGILYSF) traverse the membrane as a helical segment. The Lumenal segment spans residues 96-100 (PEVRS). Residues 101–122 (HFLVTSLVISWSITEIIRYSFF) traverse the membrane as a helical segment. Topologically, residues 123 to 142 (GFKEALGFAPSWHLWLRYSS) are cytoplasmic. A helical transmembrane segment spans residues 143–165 (FLLLYPTGITSEVGLIYLALPHI). Catalysis depends on residues tyrosine 147 and glutamate 154. Residues 166 to 184 (KTSEMYSVRMPNILNFSFD) lie on the Lumenal side of the membrane. Residues 185–204 (FFYATILVLAIYVPGSPHMY) form a helical membrane-spanning segment. The Cytoplasmic portion of the chain corresponds to 205–221 (RYMLGQRKRALSKSKRE).

Belongs to the very long-chain fatty acids dehydratase HACD family. As to quaternary structure, interacts with CDKA-1; but only with the 'Tyr-15' phosphorylated protein. Interacts with PAS1. Part of the fatty acid elongase complex which contains a beta-ketoacyl-CoA synthase (KCS), a beta-ketoacyl-CoA reductase (KCR), a beta-hydroxyacyl-CoA dehydratase (HCD) and an enoyl-CoA reductase (ECR). As to expression, high expression in young seedlings, roots, root tips, flowers and young siliques. Lower levels in leaves and stems.

It localises to the endoplasmic reticulum membrane. The protein localises to the cytoplasm. The protein resides in the nucleus. It catalyses the reaction a very-long-chain (3R)-3-hydroxyacyl-CoA = a very-long-chain (2E)-enoyl-CoA + H2O. The protein operates within lipid metabolism; fatty acid biosynthesis. In terms of biological role, catalyzes the third of the four reactions of the long-chain fatty acids elongation cycle. This endoplasmic reticulum-bound enzymatic process, allows the addition of two carbons to the chain of long- and very long-chain fatty acids/VLCFAs per cycle. This enzyme catalyzes the dehydration of the 3-hydroxyacyl-CoA intermediate into trans-2,3-enoyl-CoA, within each cycle of fatty acid elongation. Thereby, it participates in the production of VLCFAs of different chain lengths that are involved in multiple biological processes as precursors of membrane lipids and lipid mediators. May be an anti-phosphatase that prevents CDKA-1 dephosphorylation and activation. Involved in the hormonal control of cell division and differentiation. Required for proliferation control of meristematic and non-meristematic cells. Negative regulator of the cell cycle. The sequence is that of Very-long-chain (3R)-3-hydroxyacyl-CoA dehydratase PASTICCINO 2 (PAS2) from Arabidopsis thaliana (Mouse-ear cress).